The chain runs to 300 residues: MRVSELPVGRFPPLAVVPSSSRVLDVLVAMGRNRVRHVPLVDERGVLKGMVSARDLVDFLGGRRFRDVVEARFNGDVYKALEQTGVEFLKYDPPYVYTRSDLREVIELMVERGIGALAVVDEDLRVVGIVSERHVISLLANVETHVKVKEIMTSEVVYLSPMDSLFEGMRVMSERRIRRLPLVSGEELRGIVTIKDVLSYVSREDVLARLKEGSRSAVYDTPLVYISSKPVLAVEDDVDVGLAVSLMKKHGIGALVVTHDGKPRGIVTERDVLTRLPRVKGVEIFLDEATKTIFGGRVTF.

CBS domains lie at Arg-10–Val-68, Phe-88–Val-148, Met-152–Leu-207, and Ile-226–Ile-284.

This is an uncharacterized protein from Thermofilum pendens.